Consider the following 356-residue polypeptide: 5-formaminoimidazole-4-carboxamide-1-(beta)-D-ribofuranosyl 5'-monophosphate synthetase (356 aa).

Residues His27 and Ser94 each contribute to the 5-amino-1-(5-phospho-beta-D-ribosyl)imidazole-4-carboxamide site. Residues 116-333 form the ATP-grasp domain; it reads RCLAWESDRE…YSDLIEKGLS (218 aa). ATP contacts are provided by residues 145-196 and Glu226; that span reads AELI…TRYY. Asn255 lines the 5-amino-1-(5-phospho-beta-D-ribosyl)imidazole-4-carboxamide pocket. 2 residues coordinate Mg(2+): Glu293 and Glu306.

The protein belongs to the phosphohexose mutase family. The cofactor is Mg(2+). Requires Mn(2+) as cofactor.

It carries out the reaction 5-amino-1-(5-phospho-beta-D-ribosyl)imidazole-4-carboxamide + formate + ATP = 5-formamido-1-(5-phospho-D-ribosyl)imidazole-4-carboxamide + ADP + phosphate. It participates in purine metabolism; IMP biosynthesis via de novo pathway; 5-formamido-1-(5-phospho-D-ribosyl)imidazole-4-carboxamide from 5-amino-1-(5-phospho-D-ribosyl)imidazole-4-carboxamide (formate route): step 1/1. Catalyzes the ATP- and formate-dependent formylation of 5-aminoimidazole-4-carboxamide-1-beta-d-ribofuranosyl 5'-monophosphate (AICAR) to 5-formaminoimidazole-4-carboxamide-1-beta-d-ribofuranosyl 5'-monophosphate (FAICAR) in the absence of folates. In Methanothrix thermoacetophila (strain DSM 6194 / JCM 14653 / NBRC 101360 / PT) (Methanosaeta thermophila), this protein is 5-formaminoimidazole-4-carboxamide-1-(beta)-D-ribofuranosyl 5'-monophosphate synthetase.